The following is a 71-amino-acid chain: uncharacterized protein (71 aa).

This is an uncharacterized protein from Archaeoglobus fulgidus (strain ATCC 49558 / DSM 4304 / JCM 9628 / NBRC 100126 / VC-16).